A 338-amino-acid chain; its full sequence is Heat-inducible transcription repressor HrcA (338 aa).

This sequence belongs to the HrcA family.

Negative regulator of class I heat shock genes (grpE-dnaK-dnaJ and groELS operons). Prevents heat-shock induction of these operons. In Bacillus thuringiensis (strain Al Hakam), this protein is Heat-inducible transcription repressor HrcA.